A 460-amino-acid chain; its full sequence is Elongation factor 1-alpha (460 aa).

G2 is modified (n,N,N-trimethylglycine). At K3 the chain carries N6,N6-dimethyllysine; alternate. Position 3 is an N6-methyllysine; alternate (K3). The 236-residue stretch at 6-241 folds into the tr-type G domain; that stretch reads KTHINVVVIG…DSIEPPKRPT (236 aa). Residues 15 to 22 are G1; that stretch reads GHVDSGKS. Residue 15–22 coordinates GTP; sequence GHVDSGKS. Residues 71–75 are G2; the sequence is GITID. Position 80 is an N6,N6,N6-trimethyllysine (K80). A G3 region spans residues 92-95; that stretch reads DAPG. Residues 92–96 and 154–157 contribute to the GTP site; these read DAPGH and NKMD. Positions 154-157 are G4; the sequence is NKMD. Positions 193–195 are G5; the sequence is SGF. K317 bears the N6,N6-dimethyllysine; alternate mark. At K317 the chain carries N6-methyllysine; alternate. K391 is modified (N6-methyllysine).

It belongs to the TRAFAC class translation factor GTPase superfamily. Classic translation factor GTPase family. EF-Tu/EF-1A subfamily.

The protein resides in the cytoplasm. Functionally, this protein promotes the GTP-dependent binding of aminoacyl-tRNA to the A-site of ribosomes during protein biosynthesis. In Hypocrea jecorina (Trichoderma reesei), this protein is Elongation factor 1-alpha (tef1).